The following is a 642-amino-acid chain: 1,4-alpha-glucan branching enzyme GlgB (642 aa).

Asp304 acts as the Nucleophile in catalysis. The Proton donor role is filled by Glu355.

It belongs to the glycosyl hydrolase 13 family. GlgB subfamily. In terms of assembly, monomer.

The catalysed reaction is Transfers a segment of a (1-&gt;4)-alpha-D-glucan chain to a primary hydroxy group in a similar glucan chain.. It functions in the pathway glycan biosynthesis; glycogen biosynthesis. Catalyzes the formation of the alpha-1,6-glucosidic linkages in glycogen by scission of a 1,4-alpha-linked oligosaccharide from growing alpha-1,4-glucan chains and the subsequent attachment of the oligosaccharide to the alpha-1,6 position. The sequence is that of 1,4-alpha-glucan branching enzyme GlgB from Streptococcus pneumoniae serotype 4 (strain ATCC BAA-334 / TIGR4).